A 202-amino-acid chain; its full sequence is MTQVRETVSFKAGDVILYPGVPGPRDRAYRVLEGLVRLEAVDEEGNALTLRLVRPGGFFGEEALFGQERIYFAEAATDVRLEPLPENPDPELLKDLAQHLSQGLAEAYRRIERLATQRLKNRMAAALLELSETPLAHEEEGKVVLKATHDELAAAVGSVRETVTKVIGELAREGYIRSGYGKIQLLDLKGLKELAESRGQGR.

The 73-residue stretch at 117–189 folds into the HTH crp-type domain; the sequence is QRLKNRMAAA…YGKIQLLDLK (73 aa). The H-T-H motif DNA-binding region spans 149-168; the sequence is HDELAAAVGSVRETVTKVIG.

In terms of assembly, homodimer.

Functionally, activates transcription. The consensus DNA-binding site of this transcriptional regulator is 5'-WWGTGAN(5-7)ACACWW-3' in which W is A or T and N is G, A, T or C. Regulated genes include those encoding proteins involved in nutrient and energy supply, redox control and polyadenylation of mRNA. Also regulates genes involved in oxidative stress response such as genes encoding manganese superoxide dismutase and catalase, and genes encoding a protein involved in nucleotide excision repair of damaged DNA and putative proteins involved in redox control, protein degradation and transcriptional regulation. In Thermus thermophilus (strain ATCC 27634 / DSM 579 / HB8), this protein is Transcriptional regulator SdrP.